Consider the following 258-residue polypeptide: tRNA pseudouridine synthase A (258 aa).

Aspartate 52 acts as the Nucleophile in catalysis. Tyrosine 110 contributes to the substrate binding site.

The protein belongs to the tRNA pseudouridine synthase TruA family. In terms of assembly, homodimer.

It catalyses the reaction uridine(38/39/40) in tRNA = pseudouridine(38/39/40) in tRNA. Formation of pseudouridine at positions 38, 39 and 40 in the anticodon stem and loop of transfer RNAs. This is tRNA pseudouridine synthase A from Francisella tularensis subsp. holarctica (strain FTNF002-00 / FTA).